Reading from the N-terminus, the 492-residue chain is Catalase isozyme 1 (492 aa).

Active-site residues include His-65 and Asn-138. Tyr-348 is a binding site for heme.

It belongs to the catalase family. In terms of assembly, homotetramer. The cofactor is heme.

The protein localises to the cytoplasm. It localises to the cytosol. The protein resides in the peroxisome matrix. The enzyme catalyses 2 H2O2 = O2 + 2 H2O. Inhibited by salicylic acid. Catalyzes the degradation of hydrogen peroxide (H(2)O(2)) generated by peroxisomal oxidases to water and oxygen, thereby protecting cells from the toxic effects of hydrogen peroxide. In Nicotiana tabacum (Common tobacco), this protein is Catalase isozyme 1 (CAT-1).